Reading from the N-terminus, the 93-residue chain is METPLEKALTTMVTTFHKYSGREGSKLTLSRKELKELIKTELSLAEKMKESSIDNLMKSLDKNSDQEIDFKEYSVFLTTLCMAYNDFFLEDNK.

2 consecutive EF-hand domains span residues 12 to 47 and 48 to 83; these read MVTT…LAEK and MKES…LCMA. 7 residues coordinate Ca(2+): T28, E33, D61, N63, D65, E67, and E72.

This sequence belongs to the S-100 family. As to quaternary structure, homodimer.

In terms of biological role, binds calcium, zinc and copper. One subunit can simultaneously bind 2 calcium ions or 2 copper ions plus 1 zinc ion. Calcium and copper ions compete for the same binding sites. This is Protein S100-A5 (S100a5) from Mus musculus (Mouse).